The following is a 302-amino-acid chain: Possible hemolysin C (302 aa).

2 CBS domains span residues Met79 to Leu141 and Leu144 to Glu201.

Belongs to the UPF0053 family. Hemolysin C subfamily.

This is Possible hemolysin C (tlyC) from Rickettsia bellii (strain OSU 85-389).